The following is a 351-amino-acid chain: Phosphate acyltransferase (351 aa).

The protein belongs to the PlsX family. In terms of assembly, homodimer. Probably interacts with PlsY.

The protein resides in the cytoplasm. The catalysed reaction is a fatty acyl-[ACP] + phosphate = an acyl phosphate + holo-[ACP]. It participates in lipid metabolism; phospholipid metabolism. In terms of biological role, catalyzes the reversible formation of acyl-phosphate (acyl-PO(4)) from acyl-[acyl-carrier-protein] (acyl-ACP). This enzyme utilizes acyl-ACP as fatty acyl donor, but not acyl-CoA. The protein is Phosphate acyltransferase of Neisseria meningitidis serogroup C / serotype 2a (strain ATCC 700532 / DSM 15464 / FAM18).